The sequence spans 443 residues: MKRRASERDAGETSARSKALCSSISGSNAKRAGPFILGPRLGNSPVPSIVQCLARKDGTDDFYQLKILSLEERGDKAGETQEERQGKMLLHTEYSLLSLLHNQDGVVHHHGLFQDRTCEIVEDLEANKLVRKMRKRICLVLDCLCAHDFSDKTADLINLQHYVIKEKRLGERETVVIFYDVVRVVEALHKKNIVHRDLKLGNMVLNKRTHRITVTNFCLGKHLVSEDDLLKDQRGSPAYISPDVLSGRPYRGKPSDMWALGVVLFTMLYGQFPFYDSIPQELFRKIKAAEYSIPEDGRVSESTVCLIRKLLVLDPQQRLTASEVLESLGAIISSWQSMSSLSGPLQVVPDIDHLTSLENSQEAKVTEESSQYEFENYMRQQLLLAEEKNTIHEAKNFPQKRHFGNFPPIRRLGYDAQPVSPLDAAILAQRYLPPPHMALSNSH.

Positions 1-11 (MKRRASERDAG) are enriched in basic and acidic residues. The tract at residues 1–26 (MKRRASERDAGETSARSKALCSSISG) is disordered. The span at 14 to 26 (SARSKALCSSISG) shows a compositional bias: polar residues. The 298-residue stretch at 35-332 (FILGPRLGNS…EVLESLGAII (298 aa)) folds into the Protein kinase domain. Residues 41–49 (LGNSPVPSI) and Lys66 contribute to the ATP site. The active-site Proton acceptor is Asp197.

Belongs to the protein kinase superfamily. CAMK Ser/Thr protein kinase family.

It is found in the nucleus. The protein resides in the cytoplasm. It carries out the reaction L-seryl-[protein] + ATP = O-phospho-L-seryl-[protein] + ADP + H(+). The catalysed reaction is L-threonyl-[protein] + ATP = O-phospho-L-threonyl-[protein] + ADP + H(+). May be a negative regulator of NF-kappa-B and p53-mediated gene transcription. The protein is Serine/threonine-protein kinase 40 (stk40) of Xenopus tropicalis (Western clawed frog).